The following is a 406-amino-acid chain: Inner kinetochore subunit OKP1 (406 aa).

Disordered regions lie at residues 1-37 (MAAD…SDSS) and 59-122 (TQSK…TSGE). Positions 8 to 21 (FLQNIENDSINNGQ) are enriched in polar residues. The span at 26–37 (SPNRSSSESDSS) shows a compositional bias: low complexity. Acidic residues predominate over residues 69 to 78 (NSDDAEEGEI). Residue S70 is modified to Phosphoserine. Basic and acidic residues-rich tracts occupy residues 79 to 89 (EERTNKEEGQY) and 97 to 106 (LRFEVGKEST). Over residues 107-122 (GKLQSHLSDGSATSGE) the composition is skewed to polar residues. The stretch at 239-285 (SKRQFIQNRYSQELQNNERLEAILSREQNLLEETRKLCMNLKTNNKK) forms a coiled coil. Positions 317–340 (MHPDGPVTFRNDSHELNLMLNDPI) are CTF19-MCM21 binding motif. The interaction with NKP1-NKP2 stretch occupies residues 353 to 400 (VLSLLPSLKEYTKKSKELKETMGQMISDSHEEEIKEVFVPHHESHQDK). The segment at 379–406 (SDSHEEEIKEVFVPHHESHQDKTEEDIH) is disordered. Residues 380 to 406 (DSHEEEIKEVFVPHHESHQDKTEEDIH) are compositionally biased toward basic and acidic residues.

Belongs to the CENP-Q/OKP1 family. In terms of assembly, component of the heterotetrameric kinetochore subcomplex COMA, which consists of AME1, CTF19, MCM21 and OKP1. The COMA subcomplex is part of a larger constitutive centromere-associated network (CCAN) (also known as central kinetochore CTF19 complex in yeast), which is composed of at least AME1, CHL4, CNN1, CTF3, CTF19, IML3, MCM16, MCM21, MCM22, MHF1, MHF2, MIF2, NKP1, NKP2, OKP1 and WIP1. COMA binds the centromeric nucleosome-binding protein MIF2, and to the outer kinetochore MIND subcomplex. OKP1 interacts directly with AME1, with an NKP1-NKP2 dimer, and with CTF19-MCM21.

The protein resides in the nucleus. The protein localises to the chromosome. It localises to the centromere. It is found in the kinetochore. In terms of biological role, component of the kinetochore, a multiprotein complex that assembles on centromeric DNA and attaches chromosomes to spindle microtubules, mediating chromosome segregation and sister chromatid segregation during meiosis and mitosis. Component of the inner kinetochore COMA complex, which connects centromere-associated proteins and the outer kinetochore. COMA interacts with other inner kinetochore proteins to form the inner kinetochore constitutive centromere-associated network (CCAN), which serves as a structural platform for outer kinetochore assembly. The sequence is that of Inner kinetochore subunit OKP1 from Saccharomyces cerevisiae (strain ATCC 204508 / S288c) (Baker's yeast).